We begin with the raw amino-acid sequence, 237 residues long: Urease accessory protein UreF (237 aa).

This sequence belongs to the UreF family. In terms of assembly, ureD, UreF and UreG form a complex that acts as a GTP-hydrolysis-dependent molecular chaperone, activating the urease apoprotein by helping to assemble the nickel containing metallocenter of UreC. The UreE protein probably delivers the nickel.

It localises to the cytoplasm. Required for maturation of urease via the functional incorporation of the urease nickel metallocenter. In Methylibium petroleiphilum (strain ATCC BAA-1232 / LMG 22953 / PM1), this protein is Urease accessory protein UreF.